The following is a 206-amino-acid chain: FMN-dependent NADH:quinone oxidoreductase (206 aa).

FMN is bound by residues 15 to 17, 94 to 97, and 138 to 141; these read SVS, MYNF, and TRGG.

It belongs to the azoreductase type 1 family. In terms of assembly, homodimer. Requires FMN as cofactor.

The enzyme catalyses 2 a quinone + NADH + H(+) = 2 a 1,4-benzosemiquinone + NAD(+). The catalysed reaction is N,N-dimethyl-1,4-phenylenediamine + anthranilate + 2 NAD(+) = 2-(4-dimethylaminophenyl)diazenylbenzoate + 2 NADH + 2 H(+). Quinone reductase that provides resistance to thiol-specific stress caused by electrophilic quinones. Functionally, also exhibits azoreductase activity. Catalyzes the reductive cleavage of the azo bond in aromatic azo compounds to the corresponding amines. In Rhizobium meliloti (strain 1021) (Ensifer meliloti), this protein is FMN-dependent NADH:quinone oxidoreductase.